The chain runs to 597 residues: Ran-binding protein 9 (597 aa).

The B30.2/SPRY domain occupies 29–216; that stretch reads LNQRLRRLYP…VDANFGQHPF (188 aa). One can recognise a LisH domain in the interval 247–279; the sequence is WQAMIQKMVASYLVHHSYCATAEAFAKSTDQAV. Residues 285-342 enclose the CTLH domain; that stretch reads SIKNRQKIQKLVLSGRMGEAIETTQQLYPSLLERNPDLLFMLKVRQFIEMVNGTDSEV. Disordered stretches follow at residues 343–375, 389–417, and 437–475; these read RCLGGRSPKSQDSYPGSPRLFNSPVHKPSSSQA, SSSKGHTSAHSHKSCPPTLSSPELGVLNG, and SNGVSESSSNGFLNGSSTHGTEQEDCDADMEVDSTQSKR. Residues 438–456 are compositionally biased toward polar residues; the sequence is NGVSESSSNGFLNGSSTHG. The span at 459 to 468 shows a compositional bias: acidic residues; the sequence is QEDCDADMEV.

The protein belongs to the RANBP9/10 family. As to quaternary structure, identified in the CTLH complex that contains at least MAEA, RMND5A (or alternatively its paralog RMND5B), GID8, WDR26, and RANBP9 and/or RANBP10.

It is found in the cytoplasm. It localises to the cell membrane. The protein resides in the nucleus. May act as scaffolding protein, and as adapter protein to couple membrane receptors to intracellular signaling pathways. Acts as a mediator of cell spreading and actin cytoskeleton rearrangement. Core component of the CTLH E3 ubiquitin-protein ligase complex that mediates ubiquitination and subsequent proteasomal degradation of target proteins. This chain is Ran-binding protein 9 (ranbp9), found in Danio rerio (Zebrafish).